Here is a 316-residue protein sequence, read N- to C-terminus: Ribosomal RNA small subunit methyltransferase H (316 aa).

S-adenosyl-L-methionine-binding positions include 35-37 (AGH), D55, F84, D105, and Q112.

This sequence belongs to the methyltransferase superfamily. RsmH family.

It is found in the cytoplasm. The catalysed reaction is cytidine(1402) in 16S rRNA + S-adenosyl-L-methionine = N(4)-methylcytidine(1402) in 16S rRNA + S-adenosyl-L-homocysteine + H(+). In terms of biological role, specifically methylates the N4 position of cytidine in position 1402 (C1402) of 16S rRNA. The sequence is that of Ribosomal RNA small subunit methyltransferase H from Streptococcus thermophilus (strain CNRZ 1066).